Consider the following 348-residue polypeptide: D-erythrose-4-phosphate dehydrogenase (348 aa).

Residues 12-13 (RI) and Arg-81 contribute to the NAD(+) site. Residues 154-156 (SCT), Arg-200, 213-214 (TK), and Arg-236 contribute to the substrate site. Catalysis depends on Cys-155, which acts as the Nucleophile. Asn-318 serves as a coordination point for NAD(+).

Belongs to the glyceraldehyde-3-phosphate dehydrogenase family. Epd subfamily. In terms of assembly, homotetramer.

Its subcellular location is the cytoplasm. It catalyses the reaction D-erythrose 4-phosphate + NAD(+) + H2O = 4-phospho-D-erythronate + NADH + 2 H(+). It participates in cofactor biosynthesis; pyridoxine 5'-phosphate biosynthesis; pyridoxine 5'-phosphate from D-erythrose 4-phosphate: step 1/5. In terms of biological role, catalyzes the NAD-dependent conversion of D-erythrose 4-phosphate to 4-phosphoerythronate. The sequence is that of D-erythrose-4-phosphate dehydrogenase from Salmonella gallinarum (strain 287/91 / NCTC 13346).